Here is a 196-residue protein sequence, read N- to C-terminus: Thymidylate kinase (196 aa).

7–14 lines the ATP pocket; it reads GIDGSGKT.

Belongs to the thymidylate kinase family.

The catalysed reaction is dTMP + ATP = dTDP + ADP. In terms of biological role, phosphorylation of dTMP to form dTDP in both de novo and salvage pathways of dTTP synthesis. The polypeptide is Thymidylate kinase (Wolbachia pipientis wMel).